Here is a 460-residue protein sequence, read N- to C-terminus: Bifunctional beta-D-glucosidase/beta-D-fucosidase (460 aa).

The active-site Proton donor is the Glu-168. The active-site Nucleophile is the Glu-362.

It belongs to the glycosyl hydrolase 1 family. In terms of assembly, monomer.

Its subcellular location is the secreted. The enzyme catalyses Hydrolysis of terminal, non-reducing beta-D-glucosyl residues with release of beta-D-glucose.. It catalyses the reaction Hydrolysis of terminal non-reducing beta-D-fucose residues in beta-D-fucosides.. With respect to regulation, inhibited by Cu(2+), Ag(+) and Hg(+), but not by other cations such as Mg(2+), Ca(2+), Mn(2+) and Co(2+). Inhibited by 1-amino-1-deoxy-D-glucose and p-chloromercuribenzoic acid, but not by EDTA or dithiothreitol. Inhibited by the disaccharides sucrose, lactose and cellobiose. The monosaccharides D-fructose, D-mannose, D-xylose and D-glucose increase the beta-D-fucosidase activity, but not the beta-D-glucosidase activity. D-glucose inhibits the beta-D-glucosidase activity, but promotes the beta-D-fucosidase activity. D-fucose inhibits the beta-D-glucosidase activity and does not significantly affect the beta-D-fucosidase activity. In terms of biological role, bifunctional beta-D-glucosidase/beta-D-fucosidase. Activity towards pNP-beta-D-fucoside is about 80-85% of the activity towards pNP-beta-D-glucoside. Also has slight activity (less than 10%) towards pNP-beta-D-galactoside, and very low activity (less than 1%) towards pNP-beta-D-xyloside. Hydrolyzes laminaribiose, sophorose, cellobiose and gentobiose. Not active against maltose, pNP-alpha-D-glucoside or pNP-beta-L-fucoside. The sequence is that of Bifunctional beta-D-glucosidase/beta-D-fucosidase from Bifidobacterium breve.